A 188-amino-acid chain; its full sequence is dCTP deaminase (188 aa).

109–114 (KSTYAR) serves as a coordination point for dCTP. Residue Glu135 is the Proton donor/acceptor of the active site. Residues Gln154, Tyr168, and Gln178 each coordinate dCTP.

This sequence belongs to the dCTP deaminase family. In terms of assembly, homotrimer.

The enzyme catalyses dCTP + H2O + H(+) = dUTP + NH4(+). Its pathway is pyrimidine metabolism; dUMP biosynthesis; dUMP from dCTP (dUTP route): step 1/2. Its function is as follows. Catalyzes the deamination of dCTP to dUTP. The chain is dCTP deaminase from Helicobacter hepaticus (strain ATCC 51449 / 3B1).